A 480-amino-acid chain; its full sequence is Proline--tRNA ligase (480 aa).

This sequence belongs to the class-II aminoacyl-tRNA synthetase family. ProS type 3 subfamily. Homodimer.

Its subcellular location is the cytoplasm. The enzyme catalyses tRNA(Pro) + L-proline + ATP = L-prolyl-tRNA(Pro) + AMP + diphosphate. Functionally, catalyzes the attachment of proline to tRNA(Pro) in a two-step reaction: proline is first activated by ATP to form Pro-AMP and then transferred to the acceptor end of tRNA(Pro). This Roseiflexus castenholzii (strain DSM 13941 / HLO8) protein is Proline--tRNA ligase.